Consider the following 350-residue polypeptide: Putative deoxyribonuclease-2 (350 aa).

Belongs to the DNase II family.

This chain is Putative deoxyribonuclease-2, found in Burkholderia thailandensis (strain ATCC 700388 / DSM 13276 / CCUG 48851 / CIP 106301 / E264).